Here is a 644-residue protein sequence, read N- to C-terminus: MTSSSCPLLDLILSPADLKKLSISQLPGLAEEIRYRIISVLSQTGGHLSSNLGIVELTIALHYVFSSPKDKFIFDVGHQTYPHKLLTGRNNEGFDHIRNDNGLSGFTNPTESDHDLFFSGHAGTALSLALGMAQTTPLESRTHVIPILGDAAFSCGLTLEALNNISTDLSKFVVILNDNNMSISKNVGAMSRIFSRWLHHPATNKLTKQVEKWLAKIPRYGDSLAKHSRRLSQCVKNLFCPTPLFEQFGLAYVGPIDGHNVKKLIPILQSVRNLPFPILVHVCTTKGKGLDQAQNNPAKYHGVRANFNKRESAKHLPAIKPKPSFPDIFGQTLCELGEVSSRLHVVTPAMSIGSRLEGFKQKFPERFFDVGIAEGHAVTFSAGIAKAGNPVICSIYSTFLHRALDNVFHDVCMQDLPVIFAIDRAGLAYGDGRSHHGIYDMSFLRAMPQMIICQPRSQVVFQQLLYSSLHWSSPSAIRYPNIPAPHGDPLTGDPNFLRSPGNAETLSQGEDVLIIALGTLCFTALSIKHQLLAYGISATVVDPIFIKPFDNDLFSLLLMSHSKVITIEEHSIRGGLASEFNNFVATFNFKVDILNFAIPDTFLSHGSKEALTKSIGLDESSMTNRILTHFNFRSKKQTVGDVRV.

Thiamine diphosphate-binding positions include His-78 and 120–122 (GHA). A Mg(2+)-binding site is contributed by Asp-150. Thiamine diphosphate-binding positions include 151 to 152 (AA), Asn-179, and Glu-374. A Mg(2+)-binding site is contributed by Asn-179.

It belongs to the transketolase family. DXPS subfamily. In terms of assembly, homodimer. Mg(2+) is required as a cofactor. The cofactor is thiamine diphosphate.

It carries out the reaction D-glyceraldehyde 3-phosphate + pyruvate + H(+) = 1-deoxy-D-xylulose 5-phosphate + CO2. Its pathway is metabolic intermediate biosynthesis; 1-deoxy-D-xylulose 5-phosphate biosynthesis; 1-deoxy-D-xylulose 5-phosphate from D-glyceraldehyde 3-phosphate and pyruvate: step 1/1. Functionally, catalyzes the acyloin condensation reaction between C atoms 2 and 3 of pyruvate and glyceraldehyde 3-phosphate to yield 1-deoxy-D-xylulose-5-phosphate (DXP). The sequence is that of 1-deoxy-D-xylulose-5-phosphate synthase from Chlamydia pneumoniae (Chlamydophila pneumoniae).